Reading from the N-terminus, the 525-residue chain is Peptide chain release factor 3 (525 aa).

Residues 11–279 (DKRRTFAIIS…TYLEYAPQPA (269 aa)) form the tr-type G domain. GTP is bound by residues 20–27 (SHPDAGKT), 88–92 (DTPGH), and 142–145 (NKLD).

Belongs to the TRAFAC class translation factor GTPase superfamily. Classic translation factor GTPase family. PrfC subfamily.

Its subcellular location is the cytoplasm. In terms of biological role, increases the formation of ribosomal termination complexes and stimulates activities of RF-1 and RF-2. It binds guanine nucleotides and has strong preference for UGA stop codons. It may interact directly with the ribosome. The stimulation of RF-1 and RF-2 is significantly reduced by GTP and GDP, but not by GMP. The chain is Peptide chain release factor 3 from Levilactobacillus brevis (strain ATCC 367 / BCRC 12310 / CIP 105137 / JCM 1170 / LMG 11437 / NCIMB 947 / NCTC 947) (Lactobacillus brevis).